The chain runs to 246 residues: Aquaporin AqpM (246 aa).

The Cytoplasmic segment spans residues 1–11; that stretch reads MVSLTKRCIAE. Residues 12–32 form a helical membrane-spanning segment; the sequence is FIGTFFLVFFGAGAAAITLMI. Residues 33–45 are Extracellular-facing; the sequence is ASGGTAPNPFNIG. A helical membrane pass occupies residues 46-66; that stretch reads IGLLGGLGDWVAIGLAFGFAI. At 67–69 the chain is on the cytoplasmic side; that stretch reads AAS. A helical membrane pass occupies residues 70–90; the sequence is IYALGNISGCHINPAVTIGLW. The NPA 1 motif lies at 82–84; that stretch reads NPA. Topologically, residues 91-103 are extracellular; sequence SVKKFPGRDVVPY. Residues 104–124 traverse the membrane as a helical segment; that stretch reads IIAQLLGAAFASFIFLQCAGI. The Cytoplasmic portion of the chain corresponds to 125–145; sequence TAATIGGLGATAPFPGIGYWQ. Residues 146–166 form a helical membrane-spanning segment; the sequence is AMLAETVGTFLLMITIMGIAV. Over 167 to 172 the chain is Extracellular; the sequence is DERAPK. Residues 173–193 form a helical membrane-spanning segment; it reads GFAGIIIGLTVAGIITTIGNI. At 194-217 the chain is on the cytoplasmic side; sequence TGSSLNPARTFGPYLNDMVFAGTN. Residues 199–201 carry the NPA 2 motif; sequence NPA. Residues 218–238 form a helical membrane-spanning segment; sequence LWNYFPIYVIGPVVGAVLAAL. Residues 239–246 lie on the Extracellular side of the membrane; the sequence is TYQYLTSE.

The protein belongs to the MIP/aquaporin (TC 1.A.8) family. Homotetramer.

It localises to the cell membrane. Functionally, channel that permits osmotically driven movement of water in both directions. It mediates rapid entry or exit of water in response to abrupt changes in osmolarity. Also exhibits a transient but reproducible increase in the initial glycerol flux. The sequence is that of Aquaporin AqpM (aqpM) from Methanothermobacter thermautotrophicus (strain ATCC 29096 / DSM 1053 / JCM 10044 / NBRC 100330 / Delta H) (Methanobacterium thermoautotrophicum).